A 79-amino-acid polypeptide reads, in one-letter code: Small ribosomal subunit protein bS18 (79 aa).

It belongs to the bacterial ribosomal protein bS18 family. In terms of assembly, part of the 30S ribosomal subunit. Forms a tight heterodimer with protein bS6.

Functionally, binds as a heterodimer with protein bS6 to the central domain of the 16S rRNA, where it helps stabilize the platform of the 30S subunit. This chain is Small ribosomal subunit protein bS18, found in Streptococcus pneumoniae serotype 19F (strain G54).